We begin with the raw amino-acid sequence, 397 residues long: NADH-quinone oxidoreductase subunit D (397 aa).

Belongs to the complex I 49 kDa subunit family. NDH-1 is composed of 14 different subunits. Subunits NuoB, C, D, E, F, and G constitute the peripheral sector of the complex.

It is found in the cell inner membrane. It catalyses the reaction a quinone + NADH + 5 H(+)(in) = a quinol + NAD(+) + 4 H(+)(out). NDH-1 shuttles electrons from NADH, via FMN and iron-sulfur (Fe-S) centers, to quinones in the respiratory chain. The immediate electron acceptor for the enzyme in this species is believed to be ubiquinone. Couples the redox reaction to proton translocation (for every two electrons transferred, four hydrogen ions are translocated across the cytoplasmic membrane), and thus conserves the redox energy in a proton gradient. The sequence is that of NADH-quinone oxidoreductase subunit D from Magnetococcus marinus (strain ATCC BAA-1437 / JCM 17883 / MC-1).